The following is a 339-amino-acid chain: Serpentine receptor class alpha-24 (339 aa).

The next 7 membrane-spanning stretches (helical) occupy residues 26 to 46 (ITVKMSSVLVVTVILLSYYFA), 65 to 82 (LILLVCLLNSIIHQTTML), 112 to 132 (ELFVYYLTTYFSTYSVFSLAF), 151 to 171 (VSIFLLFIQLIFTLGTYYVGL), 199 to 219 (FRTLIMGICIIVTVFVYYLSV), 248 to 268 (VCILIVLQFACILISSLGVNY), and 284 to 304 (LAPFFVGVTYANLCLPLVIHC).

The protein belongs to the nematode receptor-like protein sra family.

The protein localises to the membrane. In Caenorhabditis elegans, this protein is Serpentine receptor class alpha-24 (sra-24).